We begin with the raw amino-acid sequence, 365 residues long: Caffeic acid 3-O-methyltransferase 1 (365 aa).

Position 130 to 136 (130 to 136 (MNQDKVL)) interacts with substrate. A substrate binding region spans residues 162–180 (AFEYHGTDPRFNKVFNKGM). S-adenosyl-L-methionine-binding residues include Gly-208, Asp-231, Asp-251, Met-252, and Lys-265. The active-site Proton acceptor is His-269.

This sequence belongs to the class I-like SAM-binding methyltransferase superfamily. Cation-independent O-methyltransferase family. COMT subfamily. In terms of assembly, homodimer. In terms of processing, the N-terminus is blocked. Xylem.

The enzyme catalyses (E)-caffeate + S-adenosyl-L-methionine = (E)-ferulate + S-adenosyl-L-homocysteine + H(+). It participates in aromatic compound metabolism; phenylpropanoid biosynthesis. Functionally, catalyzes the conversion of caffeic acid to ferulic acid and of 5-hydroxyferulic acid to sinapic acid. The resulting products may subsequently be converted to the corresponding alcohols that are incorporated into lignins. This is Caffeic acid 3-O-methyltransferase 1 (OMT1) from Populus tremuloides (Quaking aspen).